A 590-amino-acid chain; its full sequence is Aspartate--tRNA(Asp/Asn) ligase (590 aa).

E176 lines the L-aspartate pocket. The aspartate stretch occupies residues Q200–K203. L-aspartate contacts are provided by R222 and H451. R222 to E224 is a binding site for ATP. E485 is a binding site for ATP. R492 contacts L-aspartate. G537 to R540 lines the ATP pocket.

It belongs to the class-II aminoacyl-tRNA synthetase family. Type 1 subfamily. Homodimer.

Its subcellular location is the cytoplasm. The catalysed reaction is tRNA(Asx) + L-aspartate + ATP = L-aspartyl-tRNA(Asx) + AMP + diphosphate. Its function is as follows. Aspartyl-tRNA synthetase with relaxed tRNA specificity since it is able to aspartylate not only its cognate tRNA(Asp) but also tRNA(Asn). Reaction proceeds in two steps: L-aspartate is first activated by ATP to form Asp-AMP and then transferred to the acceptor end of tRNA(Asp/Asn). The sequence is that of Aspartate--tRNA(Asp/Asn) ligase from Ehrlichia chaffeensis (strain ATCC CRL-10679 / Arkansas).